A 614-amino-acid chain; its full sequence is Probable Xaa-Pro aminopeptidase P (614 aa).

Aspartate 409, aspartate 420, glutamate 518, and glutamate 532 together coordinate Mn(2+).

The protein belongs to the peptidase M24B family. Mn(2+) serves as cofactor.

It catalyses the reaction Release of any N-terminal amino acid, including proline, that is linked to proline, even from a dipeptide or tripeptide.. Its function is as follows. Catalyzes the removal of a penultimate prolyl residue from the N-termini of peptides. The polypeptide is Probable Xaa-Pro aminopeptidase P (ampp) (Aspergillus niger (strain ATCC MYA-4892 / CBS 513.88 / FGSC A1513)).